We begin with the raw amino-acid sequence, 455 residues long: 3-phosphoshikimate 1-carboxyvinyltransferase (455 aa).

The segment at 1–23 (MSHGSNPRPATARKSSDLKGTLR) is disordered. 3 residues coordinate 3-phosphoshikimate: Lys28, Ser29, and Arg33. Phosphoenolpyruvate is bound at residue Lys28. 2 residues coordinate phosphoenolpyruvate: Gly100 and Arg128. Residues Ser173, Gln175, Asp326, and Lys353 each contribute to the 3-phosphoshikimate site. Residue Gln175 coordinates phosphoenolpyruvate. Asp326 (proton acceptor) is an active-site residue. Residues Arg357 and Arg405 each contribute to the phosphoenolpyruvate site.

The protein belongs to the EPSP synthase family. As to quaternary structure, monomer.

It localises to the cytoplasm. The catalysed reaction is 3-phosphoshikimate + phosphoenolpyruvate = 5-O-(1-carboxyvinyl)-3-phosphoshikimate + phosphate. The protein operates within metabolic intermediate biosynthesis; chorismate biosynthesis; chorismate from D-erythrose 4-phosphate and phosphoenolpyruvate: step 6/7. Functionally, catalyzes the transfer of the enolpyruvyl moiety of phosphoenolpyruvate (PEP) to the 5-hydroxyl of shikimate-3-phosphate (S3P) to produce enolpyruvyl shikimate-3-phosphate and inorganic phosphate. This chain is 3-phosphoshikimate 1-carboxyvinyltransferase, found in Rhizobium meliloti (strain 1021) (Ensifer meliloti).